A 247-amino-acid chain; its full sequence is NifU-like scaffold protein (247 aa).

Belongs to the NifU family. Homodimer.

It is found in the plastid. The protein localises to the apicoplast. It participates in cofactor biosynthesis; iron-sulfur cluster biosynthesis. In terms of biological role, binds and transfers [4Fe-4S] iron-sulfur clusters to target proteins. This chain is NifU-like scaffold protein, found in Plasmodium falciparum (isolate 3D7).